Here is a 435-residue protein sequence, read N- to C-terminus: Homoserine dehydrogenase (435 aa).

Residues threonine 13, valine 14, and lysine 104 each contribute to the NADPH site. Residue valine 14 participates in NAD(+) binding. NADP(+) contacts are provided by valine 14 and lysine 104. Positions 128, 131, 133, and 135 each coordinate Na(+). NADP(+) is bound by residues glycine 186 and glutamate 189. The L-homoserine site is built by glutamate 189 and aspartate 200. Catalysis depends on lysine 204, which acts as the Proton donor. Glycine 301 is an NADPH binding site. An NAD(+)-binding site is contributed by glycine 301. An NADP(+)-binding site is contributed by glycine 301. The ACT domain occupies 354–429; the sequence is YLRVQAKDEP…CVEKPITMIR (76 aa).

Belongs to the homoserine dehydrogenase family. In terms of assembly, homotetramer. Requires a metal cation as cofactor.

The catalysed reaction is L-homoserine + NAD(+) = L-aspartate 4-semialdehyde + NADH + H(+). It participates in amino-acid biosynthesis; L-methionine biosynthesis via de novo pathway; L-homoserine from L-aspartate: step 3/3. Its pathway is amino-acid biosynthesis; L-threonine biosynthesis; L-threonine from L-aspartate: step 3/5. Its activity is regulated as follows. Neither NaCl nor KCl increase the activity. L-threonine and L-serine do not markedly inhibit the oxidation activity. In terms of biological role, catalyzes the conversion of L-aspartate-beta-semialdehyde (L-Asa) to L-homoserine (L-Hse), the third step in the biosynthesis of threonine and methionine from aspartate. Is highly specific for NAD(+), and displays an approximate 479-fold (kcat/Km) preference for NAD(+) over NADP(+). The chain is Homoserine dehydrogenase from Neisseria gonorrhoeae (strain ATCC 700825 / FA 1090).